The chain runs to 310 residues: Small ribosomal subunit biogenesis GTPase RsgA (310 aa).

The CP-type G domain occupies 77–238; it reads LSKQSHILAA…IIDTPGIKGF (162 aa). GTP-binding positions include 126-129 and 180-188; these read NKVD and GHSGVGKST. Zn(2+) contacts are provided by C262, C267, H269, and C275.

The protein belongs to the TRAFAC class YlqF/YawG GTPase family. RsgA subfamily. In terms of assembly, monomer. Associates with 30S ribosomal subunit, binds 16S rRNA. Zn(2+) serves as cofactor.

It is found in the cytoplasm. Functionally, one of several proteins that assist in the late maturation steps of the functional core of the 30S ribosomal subunit. Helps release RbfA from mature subunits. May play a role in the assembly of ribosomal proteins into the subunit. Circularly permuted GTPase that catalyzes slow GTP hydrolysis, GTPase activity is stimulated by the 30S ribosomal subunit. The polypeptide is Small ribosomal subunit biogenesis GTPase RsgA (Bacteroides fragilis (strain YCH46)).